The primary structure comprises 108 residues: Nucleoid-associated protein Mpe_A2533 (108 aa).

The interval 86 to 108 (TSEEKMGKLTAGMPLPPGMKLPF) is disordered. The span at 99 to 108 (PLPPGMKLPF) shows a compositional bias: pro residues.

It belongs to the YbaB/EbfC family. In terms of assembly, homodimer.

It is found in the cytoplasm. The protein localises to the nucleoid. Its function is as follows. Binds to DNA and alters its conformation. May be involved in regulation of gene expression, nucleoid organization and DNA protection. The protein is Nucleoid-associated protein Mpe_A2533 of Methylibium petroleiphilum (strain ATCC BAA-1232 / LMG 22953 / PM1).